The chain runs to 69 residues: MKEDIQPKYGDMTATCSCGNVIKTRSTLAKDIHVDVCSECHPFYTGKQKVVDSGGRIDRFNKRFTRRSK.

Residues Cys16, Cys18, Cys37, and Cys40 each coordinate Zn(2+).

It belongs to the bacterial ribosomal protein bL31 family. Type A subfamily. Part of the 50S ribosomal subunit. Zn(2+) serves as cofactor.

Binds the 23S rRNA. This Teredinibacter turnerae (strain ATCC 39867 / T7901) protein is Large ribosomal subunit protein bL31.